The chain runs to 360 residues: MVQAHGGRSRAQPLTLSLGAAMTQPPPEKTPAKKHVRLQERRGSNVALMLDVRSLGAVEPICSVNTPREVTLHFLRTAGHPLTRWALQRQPPSPKQLEEEFLKIPSNFVSPEDLDIPGHASKDRYKTILPNPQSRVCLGRAQSQEDGDYINANYIRGYDGKEKVYIATQGPMPNTVSDFWEMVWQEEVSLIVMLTQLREGKEKCVHYWPTEEETYGPFQIRIQDMKECPEYTVRQLTIQYQEERRSVKHILFSAWPDHQTPESAGPLLRLVAEVEESPETAAHPGPIVVHCSAGIGRTGCFIATRIGCQQLKARGEVDILGIVCQLRLDRGGMIQTAEQYQFLHHTLALYAGQLPEEPSP.

The segment at M1 to R37 is disordered. The tract at residues L38–D51 is interaction with MAP kinases. Residue S44 is modified to Phosphoserine. T66 is subject to Phosphothreonine. Residues S93, S110, and S143 each carry the phosphoserine modification. Positions L97 to Y350 constitute a Tyrosine-protein phosphatase domain. Substrate-binding positions include D257, C291–R297, and Q335. C291 acts as the Phosphocysteine intermediate in catalysis. At C291 the chain carries Cysteine sulfenic acid (-SOH).

Belongs to the protein-tyrosine phosphatase family. Non-receptor class subfamily. Monomer. Interacts with MAPK1, MAPK3 and several other MAP kinases. Phosphorylated on serine residues in resting T-cells. Phosphorylation increases upon exposure to stimuli that increase intracellular cAMP levels. Phosphorylation leads to dissociation of bound MAP kinases. Post-translationally, oxidized at active site cysteine. Treatment with pervanadate (vanadate and H(2)O(2)) or with antigen enhanced oxidation of active site cysteine. Expressed exclusively in thymus and spleen.

Its subcellular location is the cytoplasm. The protein localises to the cytoskeleton. It carries out the reaction O-phospho-L-tyrosyl-[protein] + H2O = L-tyrosyl-[protein] + phosphate. With respect to regulation, inhibited in cells after FCER1A triggering. In terms of biological role, protein phosphatase that acts preferentially on tyrosine-phosphorylated MAPK1. Plays a role in the regulation of T and B-lymphocyte development and signal transduction. This is Tyrosine-protein phosphatase non-receptor type 7 (PTPN7) from Homo sapiens (Human).